The primary structure comprises 296 residues: Centromere protein O (296 aa).

Residues V17–R105 adopt a coiled-coil conformation.

It belongs to the CENP-O/MCM21 family. As to quaternary structure, component of the CENPA-CAD complex, composed of CENPI, CENPK, CENPL, CENPO, CENPP, CENPQ, CENPR and CENPS. The CENPA-CAD complex interacts with the CENPA-NAC complex, at least composed of CENPA, CENPC, CENPH, CENPM, CENPN, CENPT and CENPU.

The protein localises to the nucleus. The protein resides in the chromosome. Its subcellular location is the centromere. It localises to the kinetochore. Its function is as follows. Component of the CENPA-CAD (nucleosome distal) complex, a complex recruited to centromeres which is involved in assembly of kinetochore proteins, mitotic progression and chromosome segregation. May be involved in incorporation of newly synthesized CENPA into centromeres via its interaction with the CENPA-NAC complex. Modulates the kinetochore-bound levels of NDC80 complex. In Bos taurus (Bovine), this protein is Centromere protein O (CENPO).